The chain runs to 623 residues: Chaperone protein DnaK (623 aa).

Residue T175 is modified to Phosphothreonine; by autocatalysis. Positions 580–623 (PEGAQGAGFDPNNMGGANAGNASAGNDKKDDNVVDADFKVEDDK) are disordered. A compositionally biased stretch (low complexity) spans 591–604 (NNMGGANAGNASAG). A compositionally biased stretch (basic and acidic residues) spans 605–623 (NDKKDDNVVDADFKVEDDK).

It belongs to the heat shock protein 70 family.

Its function is as follows. Acts as a chaperone. The sequence is that of Chaperone protein DnaK from Clostridium botulinum (strain Hall / ATCC 3502 / NCTC 13319 / Type A).